The chain runs to 326 residues: MVVVGLDVGYGDTKVIGVDGKRIIFPSRWAVTETESWGIGGKIPVLSTDGGQTKFIYGKYASGNNIRVPQGDGRLASKEAFPLIAAALWESGIHNDGSPVDLVIGSGTPLGTFDLEVKAAKEALENKVLTVTGPEGEVRQFNITRLIMRPQGVGAALYLLNQGIIEQQPGYGVVIDVGSRTTDVLTINLMDMEPVVELSFSLQIGVGDAISALSRKIAKETGFVVPFDLAQEALSHPVMFRQKQVGGPEVSGPILEDLANRIIENIRLNLRGEVDRVTSLIPVGGGSNLIGDRFEEIAPGTLVKIKPEDLQFANALGYRDAAERSM.

Residues 10-14 (YGDTK), serine 179, glutamine 231, 285-288 (GGSN), and glutamine 311 contribute to the ATP site.

Belongs to the thermophilic archaeal actin family.

Functionally, polymerizes into bundles of filaments, forming a helix with a filament width of 5.5 nm and an axial repeating unit of 5.5 nm. Polymerization of Ta0583 requires NTP and is optimal with ATP, but GTP, UTP, CTP, and even the deoxy form of NTP can also support the polymerization reaction. Nucleoside diphosphate or AMP-PNP does not support polymerization. The sequence is that of Archaeal actin homolog from Thermoplasma acidophilum (strain ATCC 25905 / DSM 1728 / JCM 9062 / NBRC 15155 / AMRC-C165).